We begin with the raw amino-acid sequence, 252 residues long: Chitooligosaccharide deacetylase (252 aa).

2 residues coordinate Mg(2+): His61 and His125.

Belongs to the YdjC deacetylase family. ChbG subfamily. Homodimer. Mg(2+) serves as cofactor.

It is found in the cytoplasm. The catalysed reaction is N,N'-diacetylchitobiose + H2O = N-acetyl-beta-D-glucosaminyl-(1-&gt;4)-D-glucosamine + acetate. It catalyses the reaction diacetylchitobiose-6'-phosphate + H2O = N'-monoacetylchitobiose-6'-phosphate + acetate. Its pathway is glycan degradation; chitin degradation. In terms of biological role, involved in the degradation of chitin. ChbG is essential for growth on the acetylated chitooligosaccharides chitobiose and chitotriose but is dispensable for growth on cellobiose and chitosan dimer, the deacetylated form of chitobiose. Deacetylation of chitobiose-6-P and chitotriose-6-P is necessary for both the activation of the chb promoter by the regulatory protein ChbR and the hydrolysis of phosphorylated beta-glucosides by the phospho-beta-glucosidase ChbF. Catalyzes the removal of only one acetyl group from chitobiose-6-P to yield monoacetylchitobiose-6-P, the inducer of ChbR and the substrate of ChbF. In Salmonella typhimurium (strain LT2 / SGSC1412 / ATCC 700720), this protein is Chitooligosaccharide deacetylase.